Reading from the N-terminus, the 192-residue chain is MAIKGLEQAVENLSRISKTAVPGAAAMAINRVASSAISQSASQVARETKVRRKLVKERARLKRATVKNPQARIKVNRGDLPVIKLGNARVVLSRRRRRKKGQRSSLKGGGSVLVVGNRRIPGAFIQQLKNGRWHVMQRVAGKNRYPIDVVKIPMAVPLTTAFKQNIERIRRERLPKELGYALQHQLRMVIKR.

It belongs to the Lambdalikevirus tail completion protein family.

It localises to the virion. It is found in the host cytoplasm. Its function is as follows. Stabilizes the tail structure and acts as a connector between the end of tail and the portal vertex of the capsid. The sequence is that of Tail completion protein Z (Z) from Escherichia phage lambda (Bacteriophage lambda).